Consider the following 250-residue polypeptide: Prophage antitermination protein Q homolog QuuQ (250 aa).

The protein belongs to the phage antitermination Q type 2 family.

Positively regulate expression of some phage genes. Bacterial host RNA polymerase modified by antitermination proteins transcribes through termination sites that otherwise prevent expression of the regulated genes. This Escherichia coli (strain K12) protein is Prophage antitermination protein Q homolog QuuQ (quuQ).